The chain runs to 615 residues: Nuclear cap-binding protein subunit 3 (615 aa).

Residue Lys12 forms a Glycyl lysine isopeptide (Lys-Gly) (interchain with G-Cter in SUMO2) linkage. Positions 15 to 27 are enriched in low complexity; the sequence is APAGPALGLPSPE. The interval 15-43 is disordered; the sequence is APAGPALGLPSPEVESGLERGEPEPMEVE. At Ser25 the chain carries Phosphoserine. Residue Lys70 forms a Glycyl lysine isopeptide (Lys-Gly) (interchain with G-Cter in SUMO2) linkage. Ser73 is modified (phosphoserine). Residues 126–187 form an RNA recognition motif (RRM) domain region; that stretch reads ETIYICGVDE…MSSLPAQDKM (62 aa). The short motif at 155–158 is the WLDD motif; essential for 7-methylguanosine-containing mRNA cap binding element; the sequence is WLDD. Disordered regions lie at residues 182 to 233 and 332 to 400; these read PAQD…LDTL and HSGL…MDYD. The segment covering 185-208 has biased composition (basic and acidic residues); that stretch reads DKMRSRDASEDKSSEKNKKDKQED. A Glycyl lysine isopeptide (Lys-Gly) (interchain with G-Cter in SUMO2) cross-link involves residue Lys186. Phosphoserine is present on residues Ser209 and Ser210. Composition is skewed to acidic residues over residues 209-230 and 341-360; these read SSDD…DVEL and EPIE…DMDA. The span at 361–383 shows a compositional bias: basic and acidic residues; that stretch reads DDRVVVEYHEELPGLKQPRERSL. Thr408 carries the phosphothreonine modification. Ser410 bears the Phosphoserine mark. Disordered regions lie at residues 430–454 and 467–615; these read SIRN…NKLP and EKRQ…EAES. Residues 506-516 show a composition bias toward basic and acidic residues; sequence VRREPSSDVHS. Residue Lys536 forms a Glycyl lysine isopeptide (Lys-Gly) (interchain with G-Cter in SUMO2) linkage. Composition is skewed to basic and acidic residues over residues 549 to 564 and 580 to 593; these read KTKE…RASG and IKEK…KSRL. At Ser563 the chain carries Phosphoserine. Low complexity predominate over residues 606–615; it reads ESSSGSEAES. Ser615 bears the Phosphoserine mark.

It belongs to the NCBP3 family. In terms of assembly, component of an alternative cap-binding complex (CBC) composed of NCBP1/CBP80 and NCBP3. Interacts with SRRT, KPNA3, THOC5 and EIF4A3.

The protein localises to the nucleus. It localises to the cytoplasm. In terms of biological role, associates with NCBP1/CBP80 to form an alternative cap-binding complex (CBC) which plays a key role in mRNA export. NCBP3 serves as adapter protein linking the capped RNAs (m7GpppG-capped RNA) to NCBP1/CBP80. Unlike the conventional CBC with NCBP2 which binds both small nuclear RNA (snRNA) and messenger (mRNA) and is involved in their export from the nucleus, the alternative CBC with NCBP3 does not bind snRNA and associates only with mRNA thereby playing a role in only mRNA export. The alternative CBC is particularly important in cellular stress situations such as virus infections and the NCBP3 activity is critical to inhibit virus growth. The sequence is that of Nuclear cap-binding protein subunit 3 from Mus musculus (Mouse).